The primary structure comprises 736 residues: Dimethylamine dehydrogenase (736 aa).

At Cys31 the chain carries S-6-FMN cysteine. Residue Tyr176–His179 coordinates substrate. The active-site Proton donor is Tyr181. Residues Arg229 and Arg329 each contribute to the FMN site. Positions 352, 355, 358, and 371 each coordinate [4Fe-4S] cluster. Asp398–Thr427 lines the ADP pocket.

This sequence in the N-terminal section; belongs to the NADH:flavin oxidoreductase/NADH oxidase family. Requires FMN as cofactor. It depends on [4Fe-4S] cluster as a cofactor.

The enzyme catalyses dimethylamine + oxidized [electron-transfer flavoprotein] + H2O + H(+) = methylamine + reduced [electron-transfer flavoprotein] + formaldehyde. The polypeptide is Dimethylamine dehydrogenase (dmd) (Hyphomicrobium sp. (strain x)).